The following is a 290-amino-acid chain: Pre-mRNA-splicing factor cwf20 (290 aa).

2 disordered regions span residues 1–61 (MSLV…KSSF) and 114–134 (PNNS…KKST). The segment covering 114-128 (PNNSVSDLTSTGSSE) has biased composition (polar residues).

Belongs to the 40S cdc5-associated complex (or cwf complex), a spliceosome sub-complex reminiscent of a late-stage spliceosome composed of the U2, U5 and U6 snRNAs and at least brr2, cdc5, cwf2/prp3, cwf3/syf1, cwf4/syf3, cwf5/ecm2, spp42/cwf6, cwf7/spf27, cwf8, cwf9, cwf10, cwf11, cwf12, prp45/cwf13, cwf14, cwf15, cwf16, cwf17, cwf18, cwf19, cwf20, cwf21, cwf22, cwf23, cwf24, cwf25, cwf26, cyp7/cwf27, cwf28, cwf29/ist3, lea1, msl1, prp5/cwf1, prp10, prp12/sap130, prp17, prp22, sap61, sap62, sap114, sap145, slu7, smb1, smd1, smd3, smf1, smg1 and syf2.

The protein localises to the nucleus. In terms of biological role, involved in mRNA splicing where it associates with cdc5 and the other cwf proteins as part of the spliceosome. This Schizosaccharomyces pombe (strain 972 / ATCC 24843) (Fission yeast) protein is Pre-mRNA-splicing factor cwf20 (cwf20).